The primary structure comprises 498 residues: Glycerol kinase 1 (498 aa).

Threonine 12 provides a ligand contact to ADP. Positions 12, 13, and 14 each coordinate ATP. Sn-glycerol 3-phosphate is bound at residue threonine 12. ADP is bound at residue arginine 16. Positions 82, 83, 134, and 243 each coordinate sn-glycerol 3-phosphate. 5 residues coordinate glycerol: arginine 82, glutamate 83, tyrosine 134, aspartate 243, and glutamine 244. Residues threonine 265 and glycine 308 each coordinate ADP. ATP is bound by residues threonine 265, glycine 308, glutamine 312, and glycine 409. Residues glycine 409 and asparagine 413 each coordinate ADP.

Belongs to the FGGY kinase family. In terms of assembly, homotetramer and homodimer (in equilibrium).

The catalysed reaction is glycerol + ATP = sn-glycerol 3-phosphate + ADP + H(+). It functions in the pathway polyol metabolism; glycerol degradation via glycerol kinase pathway; sn-glycerol 3-phosphate from glycerol: step 1/1. Its activity is regulated as follows. Activated by phosphorylation and inhibited by fructose 1,6-bisphosphate (FBP). In terms of biological role, key enzyme in the regulation of glycerol uptake and metabolism. Catalyzes the phosphorylation of glycerol to yield sn-glycerol 3-phosphate. The sequence is that of Glycerol kinase 1 from Clostridium tetani (strain Massachusetts / E88).